The sequence spans 459 residues: Adenylosuccinate synthetase isozyme 1 C (459 aa).

A disordered region spans residues 1-31 (MSFSWSAKDHKSYTNPPSNPTQGLKRPRNDT). Positions 13 to 22 (YTNPPSNPTQ) are enriched in polar residues. GTP contacts are provided by residues 44–50 (GDEGKGK) and 72–74 (GHT). D45 functions as the Proton acceptor in the catalytic mechanism. D45 and G72 together coordinate Mg(2+). Position 45 (D45) interacts with substrate. IMP contacts are provided by residues 45 to 48 (DEGK), 70 to 73 (NAGH), T165, R179, N258, T273, and R337. The active-site Proton donor is H73. Residue 333 to 339 (VTTGRKR) coordinates substrate. Residues R339, 365-367 (KLD), and 447-450 (GVGK) each bind GTP.

Belongs to the adenylosuccinate synthetase family. Homodimer. Requires Mg(2+) as cofactor.

It localises to the cytoplasm. It carries out the reaction IMP + L-aspartate + GTP = N(6)-(1,2-dicarboxyethyl)-AMP + GDP + phosphate + 2 H(+). It functions in the pathway purine metabolism; AMP biosynthesis via de novo pathway; AMP from IMP: step 1/2. In terms of biological role, component of the purine nucleotide cycle (PNC), which interconverts IMP and AMP to regulate the nucleotide levels in various tissues, and which contributes to glycolysis and ammoniagenesis. Catalyzes the first committed step in the biosynthesis of AMP from IMP. The chain is Adenylosuccinate synthetase isozyme 1 C (adss1c) from Salmo salar (Atlantic salmon).